The sequence spans 293 residues: MAEGKIIKALSGFYYVLSEGKVFQCRGRGVFRKQKITPLVGDHVEFQATSETEGYIMNIRERKNWLVRPPIANVEQAILVFSAVEPDFSTRLLDRFLVLVESKHIRPIIVVNKMDLVDDQTKPTMEQYIRDYRQIGYDVIETSTITKLGVEQLLSYLEGHISVFAGQSGVGKSSLLNALRPDLQLKTNDISTHLGRGKHTTRHVELLEIGGGLVADTPGFSALELDDIELEELPLYFPEFCERSEECKFRGCLHIAEPKCAVREAVESGKIPSYRYENYISFVEEIKERKPRY.

A CP-type G domain is found at 63 to 223 (KNWLVRPPIA…VADTPGFSAL (161 aa)). GTP-binding positions include 112–115 (NKMD) and 166–174 (GQSGVGKSS). Zn(2+) is bound by residues Cys247, Cys252, His254, and Cys260.

Belongs to the TRAFAC class YlqF/YawG GTPase family. RsgA subfamily. Monomer. Associates with 30S ribosomal subunit, binds 16S rRNA. Zn(2+) serves as cofactor.

The protein resides in the cytoplasm. Functionally, one of several proteins that assist in the late maturation steps of the functional core of the 30S ribosomal subunit. Helps release RbfA from mature subunits. May play a role in the assembly of ribosomal proteins into the subunit. Circularly permuted GTPase that catalyzes slow GTP hydrolysis, GTPase activity is stimulated by the 30S ribosomal subunit. The polypeptide is Small ribosomal subunit biogenesis GTPase RsgA (Geobacillus sp. (strain WCH70)).